Reading from the N-terminus, the 213-residue chain is Cytochrome c biogenesis ATP-binding export protein CcmA (213 aa).

Residues L3 to T211 enclose the ABC transporter domain. G35 to S42 contacts ATP.

The protein belongs to the ABC transporter superfamily. CcmA exporter (TC 3.A.1.107) family. The complex is composed of two ATP-binding proteins (CcmA) and two transmembrane proteins (CcmB).

It is found in the cell inner membrane. The enzyme catalyses heme b(in) + ATP + H2O = heme b(out) + ADP + phosphate + H(+). In terms of biological role, part of the ABC transporter complex CcmAB involved in the biogenesis of c-type cytochromes; once thought to export heme, this seems not to be the case, but its exact role is uncertain. Responsible for energy coupling to the transport system. The sequence is that of Cytochrome c biogenesis ATP-binding export protein CcmA from Agrobacterium fabrum (strain C58 / ATCC 33970) (Agrobacterium tumefaciens (strain C58)).